A 244-amino-acid polypeptide reads, in one-letter code: 1-(5-phosphoribosyl)-5-[(5-phosphoribosylamino)methylideneamino] imidazole-4-carboxamide isomerase (244 aa).

Residue aspartate 12 is the Proton acceptor of the active site. Residue aspartate 131 is the Proton donor of the active site.

It belongs to the HisA/HisF family.

It localises to the cytoplasm. The catalysed reaction is 1-(5-phospho-beta-D-ribosyl)-5-[(5-phospho-beta-D-ribosylamino)methylideneamino]imidazole-4-carboxamide = 5-[(5-phospho-1-deoxy-D-ribulos-1-ylimino)methylamino]-1-(5-phospho-beta-D-ribosyl)imidazole-4-carboxamide. It participates in amino-acid biosynthesis; L-histidine biosynthesis; L-histidine from 5-phospho-alpha-D-ribose 1-diphosphate: step 4/9. This Nocardioides sp. (strain ATCC BAA-499 / JS614) protein is 1-(5-phosphoribosyl)-5-[(5-phosphoribosylamino)methylideneamino] imidazole-4-carboxamide isomerase.